We begin with the raw amino-acid sequence, 193 residues long: Ion-translocating oxidoreductase complex subunit A (193 aa).

6 helical membrane passes run 5–25, 39–59, 62–82, 102–122, 134–154, and 171–191; these read LLLL…FLGL, MGMG…AWAV, FILV…LVIA, LLGI…VALL, AVYG…FAAI, and SIAL…SGLV.

The protein belongs to the NqrDE/RnfAE family. As to quaternary structure, the complex is composed of six subunits: RnfA, RnfB, RnfC, RnfD, RnfE and RnfG.

It localises to the cell inner membrane. Its function is as follows. Part of a membrane-bound complex that couples electron transfer with translocation of ions across the membrane. The protein is Ion-translocating oxidoreductase complex subunit A of Edwardsiella ictaluri (strain 93-146).